We begin with the raw amino-acid sequence, 395 residues long: Zinc finger protein 385D (395 aa).

Matrin-type zinc fingers lie at residues 80–110, 204–234, and 267–297; these read ISCN…KLKA, LYCS…MLEA, and FHCE…RASG. The disordered stretch occupies residues 282 to 308; that stretch reads LKQHISSRRHKDRASGKPPKPKYSPYN.

The protein localises to the nucleus. In Rattus norvegicus (Rat), this protein is Zinc finger protein 385D (Znf385d).